A 179-amino-acid chain; its full sequence is Large ribosomal subunit protein uL6 (179 aa).

It belongs to the universal ribosomal protein uL6 family. As to quaternary structure, part of the 50S ribosomal subunit.

This protein binds to the 23S rRNA, and is important in its secondary structure. It is located near the subunit interface in the base of the L7/L12 stalk, and near the tRNA binding site of the peptidyltransferase center. The chain is Large ribosomal subunit protein uL6 from Mycobacterium avium (strain 104).